Here is a 1532-residue protein sequence, read N- to C-terminus: IgA-specific serine endopeptidase autotransporter (1532 aa).

A signal peptide spans 1-27; the sequence is MKAKRFKINAISLSIFLAYALTPYSEA. Positions 28 to 322 constitute a Peptidase S6 domain; that stretch reads ALVRDDVDYQ…NIYKKEFADK (295 aa). S278 is a catalytic residue. Disordered stretches follow at residues 979–1136 and 1166–1217; these read GRPV…KDNS and LEDE…NTEL. The span at 989 to 1004 shows a compositional bias: polar residues; that stretch reads AANTASQAQKATQTDG. Basic and acidic residues predominate over residues 1045 to 1101; that stretch reads EAEKVARQKDEEAKRKAAEIARQQEEARKAAELAAKQKAEAERKARELARQKAEEAS. The span at 1107-1116 shows a compositional bias: basic residues; the sequence is KPKRRRRRAI. Basic and acidic residues predominate over residues 1207–1217; it reads SDKHPQDNTEL. Residues 1280-1532 form the Autotransporter domain; the sequence is ADAEKNSVWM…SGQIKIQIRF (253 aa).

The protein resides in the periplasm. Its subcellular location is the secreted. It localises to the cell surface. The protein localises to the cell outer membrane. It carries out the reaction Cleavage of immunoglobulin A molecules at certain Pro-|-Xaa bonds in the hinge region. No small molecule substrates are known.. Its function is as follows. This protease is specific for immunoglobulin A. This chain is IgA-specific serine endopeptidase autotransporter (iga), found in Neisseria gonorrhoeae.